Consider the following 203-residue polypeptide: MKSTIFFALFLVCAFTISYLPSATAQFVLDTDDDPLQNGGTYYMLPVMRGKGGGIEVDSTGKEICPLTVVQSPNELDKGIGLVFTSPLHALFIAERYPLSIKFGSFAVITLCAGMPTEWAIVEREGLQAVKLAARDTVDGWFNIERVSREYNDYKLVFCPQQAEDNKCEDIGIQIDDDGIRRLVLSKNKPLVVQFQKFRSSTA.

The signal sequence occupies residues 1 to 25; it reads MKSTIFFALFLVCAFTISYLPSATA. 2 cysteine pairs are disulfide-bonded: cysteine 65–cysteine 112 and cysteine 159–cysteine 168.

Belongs to the protease inhibitor I3 (leguminous Kunitz-type inhibitor) family. Seed, and at low levels in leaf, root, and stem.

In terms of biological role, has probably no trypsin inhibitor activity. KTi3 is responsible for most of the Kunitz trypsin inhibitor activity and protein found in soybean seeds. The protein is Kunitz-type trypsin inhibitor KTI1 (KTI1) of Glycine max (Soybean).